Consider the following 3508-residue polypeptide: MNMVKRIMGRPRQEECSPQDNALGLMHLRRLFTELCHPPRHMTQKEQEEKLYMMLPVFNRVFGNAPPNTMTEKFSDLLQFTTQVSRLMVTEIRRRASNKSTEAASRAIVQFLEINQSEEASRGWMLLTTINLLASSGQKTVDCMTTMSVPSTLVKCLYLFFDLPHVPEAGGGAQNELPLAERRGLLQKAFVQILVKLCSFVSPAEELAQKDDLQLLFSAITSWCPPYNLPWRKSAGEVLMTISRHGLSVNVVKYIHEKECLSTCVQNMQQSDDLSPLEIVEMFAGLSCFLKDSSDVSQTLLDDFRIWQGYNFLCDLLLRLEQGKEAECRDALKDLVSLVTSLTTYGVSELKPAGVTTGAPFLLPGFAVPQPAGKGHSVRNIQAFAVLQNAFLKAKTNFLAQIILDAITNIYMADNANYFILESQHTLSQFAEKISKLPEVQNKYFEMLEFVVFSLNYIPCKELISVSILLKSSSSYHCSIIAMKTLLKFTRHDYIFKDVFREVGLLEVMVNLLHKYAALLKDPAQALNEQGDSRNNSSVEDQKHLALLVMEALTVLLQGSNTNAGIFREFGGARCAHNIVKYPQCRQHALMTIQQLVLSPNGEDDMGTLLGLMHSAPPTELQLKTDILRALLSVLRESHRSRTVFRKVGGFVYITSLLVAMERSLSSPPKNGWEKVSQSQVLELLHTVFCTLTAALRYEPANSHFFKTEIQYEKLADAVRFLGCFSDLRKISAVNVFPSNTQPFQRLLEEGAVSVDSVSPTLRHCSKLFIYLYKVATDSFDSHAEQIPPCLTSESSLPSPWGTPALSRKRHAFHCVSTPPVYPAKNVTDLKLQVTSSPLQSSDAVIIHPGAMLAMLDLLASVGSVTQPEHALDLQLAVANILQSLVHTERNQQVMCEAGLHARLLQRCGAALADEDHSLHPPLQRMFERLASQALEPMVLREFLRLASPLNCGAWDKKLLKQYRVHKPSSLSFEPEMRSSVITSLEGLGSDNVFSSHEDNHYRISKSLVKSAEGSTVPLTRVKCLVSMTTPHDIRLHGSSVTPAFVEFDTSLEGFGCLFLPSLAPHNAPTNNTVTTGLTDGAVVSGMGSGERFFPPPSGLSYSCWFCIEHFSSPPNNHPVRLLTVVRRANSSEQHYVCLAIVLSAKDRSLIVSTKEELLQNYVDDFSEESSFYEILPCCARFRCGELVVEGQWHHLALLMSRGMLKNSTAALYLDGQLVSTVKLHYVHSTPGGSGSANPPVLSTVYAYVGTPPAQRQIASLVWRLGPTHFLEEVLPPSSVTTIYELGPNYVGSFQAVCVPCKDAKSEGVTPSPVSLVAEEKVSFGLYALSVSSLTVARIRKVYNKLDSKAIAKQLGISSHENATPVKLVHNAAGHLNGPARTIGAALIGYLGVRTFVPKPVATTLQYIGGAAAILGLVAMASDVEGLYAAVKALVCVVKSNPLASKEMERIKGYQLLAMLLKKKRSLLNSHILHLTFSLVGTVDSGHETSIIPNSTAFQDLLCDFEVWLHAPYELHLSLFEHFIELLTESSEASKNAKLMREFQLIPKLLLTLRDMSLSQPTIAAISNVLSFLLQGFPNSNDLLRFGQFISSTLPTFAVCEKFVVMEINNEEKPDPGAEEEFGGLVSANLILLRNRLLDILLKLVYTSKEKTNINLQACEELVRTLGFDWIMMFMEEHLHPTTVTAAMRILVVLLSNQSILIKFKEGLSGGGWLEQTDSVLTNKIGTVLGFNVGRSAGGRSTVREINRDACHFPGFLVLQSFLPKHTNVPALYFLLMALFLQQPVSELPENLQVSVPVTSSRCKQGCQFDLDSIWTFIFGVPASSGTVVSSIHNVCTESAFLLLGMLRSMLNSPWQSEEEGSWLREYPVTLMQFFRYLYHNVPDLASMWLSPDFLCALAATVFPFNIRPYSEMVTDLDDEVGSPAEEFKAFAADTGMNRSQSEYCNVGTKTYLTNHPAKKFVFDFMRVLIIDNLCLTPASKQTPLIDLLLEASPERSTRTQQKEFQTHVLDSVMDHLLAADVLLGEDASLPITSGGSYQVLVNNVFYFTQRVVDKLWQGMFNKESKLLIDFIIQLIAQSKRRSQGLSLDAVYHCLNRTILYQFSRAHKTVPQQVALLDSLRVLTVNRNLILGPGNHDQEFISCLAHCLINLHAGSVEGFGLEAEARMTTWHIMIPSDIEPDGGYSQDISEGRQLLIKAVNRVWTELIHSKKQVLEELFKVSLPVNDRGHVDIALARPLIEEAGLKCWQNHLAHEKKCISRGEALVPTTQSKLSRVSSGFGLSKLTGSRRNRKESGLHKHSPSPQEISQWMFTHIAVVRDLVDTQYKEYQERQQNALKYVTEEWCQIECELLRERGLWGPPIGSHLDKWMLEMTEGPCRMRKKMVRNDMFYNHYPYVPETEQEASVGKPARYRRAISYDSKEYYLRLASGNPAIVQDAIVESSEGEATQQEPEHGEDTIAKVKGLVKPPLKRSRSAPDGGDEETQEQLQDQIAESGSIEEEEKTDNATLLRLLEEGEKIQHMYRCARVQGLDTSEGLLLFGKEHFYVIDGFTMTATREIRDIETLPPNMHEPIIPRGARQGPSQLKRTCSIFAYEDIKEVHKRRYLLQPIAVEVFSGDGRNYLLAFQKGIRNKVYQRFLAVVPSLTDSSESVSGQRPNTSVEQGSGLLSTLVGEKSVTQRWERGEISNFQYLMHLNTLAGRSYNDLMQYPVFPWILSDYDSEEVDLTNPKTFRNLAKPMGAQTDERLAQYKKRYKDWEDPNGETPAYHYGTHYSSAMIVASYLVRMEPFTQIFLRLQGGHFDLADRMFHSVREAWYSASKHNMADVKELIPEFFYLPEFLFNSNNFDLGCKQNGTKLGDVILPPWAKGDPREFIRVHREALECDYVSAHLHEWIDLIFGYKQQGPAAVEAVNVFHHLFYEGQVDIYNINDPLKETATIGFINNFGQIPKQLFKKPHPPKRVRSRLNGDNIGISVPPGATSDKIFFHHLDNLRPSLTPVKELKEPVGQIVCTDKGILAVEQNKVLIPPAWNKTFAWGYADLSCRLGTYESDKAVTVYECLSEWGQILCAVCPNPKLVITGGTSTVVCVWEMGTSKEKAKPLTLKQALLGHTDTVTCATASLAYHIIVSGSRDRTCIIWDLNKLSFLTQLRGHRAPVSALCINELTGDIVSCAGTYIHVWSINGNPIVSVNTFTGRSQQIVCCCMSEMNEWDTQNVIVTGHSDGVVRFWRMEFLQVPETPAPEPVEDLEMQEGCPEAQIGQQAQDDDSSDSETEEPSVSQDPKDTSSQPSSTSHRPRAASCRATATWCTDSGSDDSRRWSDQLSLDEKDGFIFVNYSEGQTRAHLQGPLAHPHPNPIEARSYSRLKPGYRWERQLVFRSKLTMHTAFDRKDNTHPAEVTALGVSKDHSRILVGDSRGRVFSWSVSDQPGRSAADHWVKDEGGDSCSGCSVRFSLTERRHHCRNCGQLFCQKCSRFQSEIKRLKISSPVRVCQNCYYSLQHERGAEDGPRNC.

Serine 1942 and serine 2277 each carry phosphoserine. 2 disordered regions span residues phenylalanine 2279–proline 2303 and serine 2441–aspartate 2504. The interval leucine 2284–arginine 2963 is sufficient for translocalization to p62 bodies/ALIS. Basic and acidic residues predominate over residues glutamate 2450–alanine 2459. A Phosphoserine modification is found at serine 2474. The BEACH-type PH domain occupies glutamate 2513–leucine 2638. Residues methionine 2568–cysteine 3508 form an interaction with SQSTM1 region. In terms of domain architecture, BEACH spans glycine 2665–lysine 2958. Residues arginine 2963–cysteine 3508 form an interaction with ATG5 region. WD repeat units follow at residues serine 3059–lysine 3097, glycine 3107–glutamine 3146, glycine 3149–asparagine 3188, and glycine 3192–threonine 3236. Residues alanine 3254–serine 3317 form a disordered region. The segment covering glutamine 3261–glutamate 3272 has biased composition (acidic residues). Phosphoserine occurs at positions 3317 and 3321. An LIR motif is present at residues aspartate 3326 to valine 3331. One copy of the WD 5 repeat lies at threonine 3390–alanine 3429. Residues aspartate 3436 to glutamine 3496 form an FYVE-type zinc finger. Zn(2+) is bound by residues cysteine 3442, cysteine 3445, cysteine 3458, cysteine 3461, cysteine 3466, cysteine 3469, cysteine 3488, and cysteine 3491.

Directly interacts with ATG5 and associates with the ATG12-ATG5-ATG16L complex. Interacts with p62/SQSTM1. Directly interacts with GABARAP, GABARAPL1 and GABARAPL2; the interaction with GABARAP is required for WDFY3 recruitment to MAP1LC3B-positive p62/SQSTM1 bodies. Weakly interacts with MAP1LC3C; this interaction is direct. Does not interact with MAP1LC3A, nor MAP1LC3B. Interacts with TRAF6. Widely expressed, with high levels in the brain (at protein level). In the brain, expressed by both neuronal and non-neuronal cells. Expressed in bones, in the periosteum, cartilage, growth plate, trabeculae of the primary spongiosa, and scattered hematopoietic cells within the medullary cavity. Tends to be expressed at lower levels in the hypertrophic zone compared to trabeculae. Expressed in osteoblasts, osteoclasts and bone-marrow derived macrophages.

It is found in the nucleus. It localises to the cytoplasm. Its subcellular location is the cytosol. The protein resides in the PML body. The protein localises to the membrane. It is found in the perikaryon. It localises to the cell projection. Its subcellular location is the axon. Functionally, required for selective macroautophagy (aggrephagy). Acts as an adapter protein by linking specific proteins destined for degradation to the core autophagic machinery members, such as the ATG5-ATG12-ATG16L E3-like ligase, SQSTM1 and LC3. Involved in the formation and autophagic degradation of cytoplasmic ubiquitin-containing inclusions (p62 bodies, ALIS/aggresome-like induced structures). Important for normal brain development. Essential for the formation of axonal tracts throughout the brain and spinal cord, including the formation of the major forebrain commissures. Involved in the ability of neural cells to respond to guidance cues. Required for cortical neurons to respond to the trophic effects of netrin-1/NTN1. Regulates Wnt signaling through the removal of DVL3 aggregates, likely in an autophagy-dependent manner. This process may be important for the determination of brain size during embryonic development. May regulate osteoclastogenesis by acting on the TNFSF11/RANKL - TRAF6 pathway. After cytokinetic abscission, involved in midbody remnant degradation. In vitro strongly binds to phosphatidylinositol 3-phosphate (PtdIns3P). This is WD repeat and FYVE domain-containing protein 3 (Wdfy3) from Mus musculus (Mouse).